Consider the following 321-residue polypeptide: tRNA-5-methyluridine(54) 2-sulfurtransferase (321 aa).

Residues C3, C6, C22, and H25 each coordinate Zn(2+). ATP is bound by residues 53–55, D59, and I79; that span reads AVS. [4Fe-4S] cluster-binding residues include C130 and C133. A Glycyl lysine isopeptide (Lys-Gly) (interchain with G-Cter in TtuB) cross-link involves residue K137. Positions 156 and 161 each coordinate ATP. C222 contributes to the [4Fe-4S] cluster binding site. Residues K226 and K229 each participate in a glycyl lysine isopeptide (Lys-Gly) (interchain with G-Cter in TtuB) cross-link. Zn(2+) is bound by residues C274, C277, C286, and C289.

The protein belongs to the TtcA family. TtuA subfamily. As to quaternary structure, homodimer. Is able to form a heterocomplex with TtuB. The cofactor is [4Fe-4S] cluster. Mg(2+) serves as cofactor. In terms of processing, conjugated to TtuB via covalent linkages involving Lys-137, Lys-226 and Lys-229.

The enzyme catalyses [TtuB sulfur-carrier protein]-C-terminal-Gly-aminoethanethioate + 5-methyluridine(54) in tRNA + ATP + H2O = [TtuB sulfur-carrier protein]-C-terminal Gly-Gly + 5-methyl-2-thiouridine(54) in tRNA + AMP + diphosphate + H(+). Its pathway is tRNA modification. Enzymatic activity may be regulated by TtuB conjugation. In terms of biological role, catalyzes the ATP-dependent 2-thiolation of 5-methyluridine residue at position 54 in the T loop of tRNAs, leading to 5-methyl-2-thiouridine (m(5)s(2)U or s(2)T). This modification allows thermal stabilization of tRNAs in thermophilic microorganisms, and is required for cell growth at high temperatures. TtuA transfers the S atom from the thiocarboxylated C-terminus of TtuB to tRNA. The protein is tRNA-5-methyluridine(54) 2-sulfurtransferase of Thermus thermophilus (strain ATCC BAA-163 / DSM 7039 / HB27).